Reading from the N-terminus, the 596-residue chain is Aspartate--tRNA(Asp/Asn) ligase (596 aa).

Glu-169 is an L-aspartate binding site. An aspartate region spans residues 193-196 (QLFK). Arg-215 contacts L-aspartate. ATP is bound by residues 215-217 (RDE) and Gln-224. His-447 provides a ligand contact to L-aspartate. Glu-481 contacts ATP. L-aspartate is bound at residue Arg-488. 533-536 (GWDR) is an ATP binding site. The interval 559 to 596 (GYDPLTQAPAPITAQQRKEAGVDFKPEAKKADPGATKA) is disordered. The segment covering 574–590 (QRKEAGVDFKPEAKKAD) has biased composition (basic and acidic residues).

Belongs to the class-II aminoacyl-tRNA synthetase family. Type 1 subfamily. As to quaternary structure, homodimer.

It is found in the cytoplasm. The catalysed reaction is tRNA(Asx) + L-aspartate + ATP = L-aspartyl-tRNA(Asx) + AMP + diphosphate. Functionally, aspartyl-tRNA synthetase with relaxed tRNA specificity since it is able to aspartylate not only its cognate tRNA(Asp) but also tRNA(Asn). Reaction proceeds in two steps: L-aspartate is first activated by ATP to form Asp-AMP and then transferred to the acceptor end of tRNA(Asp/Asn). This chain is Aspartate--tRNA(Asp/Asn) ligase, found in Arthrobacter sp. (strain FB24).